The following is a 466-amino-acid chain: Glycylpeptide N-tetradecanoyltransferase (466 aa).

The interval 1 to 21 (MDNENNKNTKNSQQDSSFSEG) is disordered. A compositionally biased stretch (polar residues) spans 8 to 19 (NTKNSQQDSSFS). Ser17 carries the post-translational modification Phosphoserine. Residues 51–54 (FKFW), 185–187 (LCI), and 193–197 (SKRLT) each bind tetradecanoyl-CoA. Residue Ile466 is the Proton acceptor; via carboxylate of the active site.

The protein belongs to the NMT family. In terms of assembly, monomer.

The protein localises to the cytoplasm. It catalyses the reaction N-terminal glycyl-[protein] + tetradecanoyl-CoA = N-tetradecanoylglycyl-[protein] + CoA + H(+). Functionally, adds a myristoyl group to the N-terminal glycine residue of certain cellular proteins. The chain is Glycylpeptide N-tetradecanoyltransferase (nmt1) from Schizosaccharomyces pombe (strain 972 / ATCC 24843) (Fission yeast).